Here is a 487-residue protein sequence, read N- to C-terminus: Probable glutamate receptor (487 aa).

Residues 1–23 form the signal peptide; it reads MDKGLHFIFCVVTAVLLLRESSQ. Topologically, residues 24-169 are extracellular; the sequence is TGAMRNDDAM…FFHFLAPFSK (146 aa). N-linked (GlcNAc...) asparagine glycosylation is present at Asn104. The helical transmembrane segment at 170 to 190 threads the bilayer; that stretch reads ETWTGLLFAYVLTCVCLFLVA. Residues 191–235 lie on the Cytoplasmic side of the membrane; sequence RLSPCEWNEPKNEENHFTFLNSLWFGAGALTLQGVTPRPKAFSVR. Residues 236–256 form a helical membrane-spanning segment; that stretch reads VIAAIWWLFTIALLAAYIANF. Over 257 to 419 the chain is Extracellular; that stretch reads TALLSSGSEQ…EGWSPLQPQA (163 aa). A helical membrane pass occupies residues 420 to 440; it reads LGGLFLTLAIGLALGVIAAMV. Topologically, residues 441 to 487 are cytoplasmic; it reads ELSNKSRHAAGHIKKSCCSIFTEEMCTRLRIKENTRQTQETSGRANA.

It belongs to the glutamate-gated ion channel (TC 1.A.10.1) family.

It localises to the cell membrane. The protein resides in the postsynaptic cell membrane. Functionally, receptor for glutamate. L-glutamate acts as an excitatory neurotransmitter at many synapses in the central nervous system. The postsynaptic actions of Glu are mediated by a variety of receptors that are named according to their selective agonists. The protein is Probable glutamate receptor (KBP) of Gallus gallus (Chicken).